The following is a 225-amino-acid chain: Phosphatidylserine decarboxylase proenzyme (225 aa).

Ser189 serves as the catalytic Schiff-base intermediate with substrate; via pyruvic acid. Position 189 is a pyruvic acid (Ser); by autocatalysis (Ser189).

Belongs to the phosphatidylserine decarboxylase family. PSD-A subfamily. In terms of assembly, heterodimer of a large membrane-associated beta subunit and a small pyruvoyl-containing alpha subunit. Pyruvate serves as cofactor. Post-translationally, is synthesized initially as an inactive proenzyme. Formation of the active enzyme involves a self-maturation process in which the active site pyruvoyl group is generated from an internal serine residue via an autocatalytic post-translational modification. Two non-identical subunits are generated from the proenzyme in this reaction, and the pyruvate is formed at the N-terminus of the alpha chain, which is derived from the carboxyl end of the proenzyme. The post-translation cleavage follows an unusual pathway, termed non-hydrolytic serinolysis, in which the side chain hydroxyl group of the serine supplies its oxygen atom to form the C-terminus of the beta chain, while the remainder of the serine residue undergoes an oxidative deamination to produce ammonia and the pyruvoyl prosthetic group on the alpha chain.

The protein localises to the cell membrane. The enzyme catalyses a 1,2-diacyl-sn-glycero-3-phospho-L-serine + H(+) = a 1,2-diacyl-sn-glycero-3-phosphoethanolamine + CO2. It functions in the pathway phospholipid metabolism; phosphatidylethanolamine biosynthesis; phosphatidylethanolamine from CDP-diacylglycerol: step 2/2. Functionally, catalyzes the formation of phosphatidylethanolamine (PtdEtn) from phosphatidylserine (PtdSer). This chain is Phosphatidylserine decarboxylase proenzyme, found in Amoebophilus asiaticus (strain 5a2).